Here is a 141-residue protein sequence, read N- to C-terminus: Large ribosomal subunit protein uL11 (141 aa).

It belongs to the universal ribosomal protein uL11 family. Part of the ribosomal stalk of the 50S ribosomal subunit. Interacts with L10 and the large rRNA to form the base of the stalk. L10 forms an elongated spine to which L12 dimers bind in a sequential fashion forming a multimeric L10(L12)X complex. One or more lysine residues are methylated.

Its function is as follows. Forms part of the ribosomal stalk which helps the ribosome interact with GTP-bound translation factors. In Prochlorococcus marinus (strain MIT 9211), this protein is Large ribosomal subunit protein uL11.